Consider the following 188-residue polypeptide: GTP cyclohydrolase 1 (188 aa).

Cys-73, His-76, and Cys-144 together coordinate Zn(2+).

The protein belongs to the GTP cyclohydrolase I family. In terms of assembly, homomer.

It carries out the reaction GTP + H2O = 7,8-dihydroneopterin 3'-triphosphate + formate + H(+). It participates in cofactor biosynthesis; 7,8-dihydroneopterin triphosphate biosynthesis; 7,8-dihydroneopterin triphosphate from GTP: step 1/1. The protein is GTP cyclohydrolase 1 of Caldivirga maquilingensis (strain ATCC 700844 / DSM 13496 / JCM 10307 / IC-167).